The following is a 209-amino-acid chain: Thymidylate kinase (209 aa).

Residue 10-17 (GPEGAGKT) participates in ATP binding.

It belongs to the thymidylate kinase family.

The enzyme catalyses dTMP + ATP = dTDP + ADP. Functionally, phosphorylation of dTMP to form dTDP in both de novo and salvage pathways of dTTP synthesis. This chain is Thymidylate kinase, found in Anoxybacillus flavithermus (strain DSM 21510 / WK1).